The primary structure comprises 139 residues: Actin-depolymerizing factor 2 (139 aa).

Residues 7–139 (GLAVSDECKV…SLDIVKSRTN (133 aa)) form the ADF-H domain.

The protein belongs to the actin-binding proteins ADF family. In terms of tissue distribution, expressed in pollen.

In terms of biological role, actin-depolymerizing protein. Severs actin filaments (F-actin) and binds to actin monomers. The protein is Actin-depolymerizing factor 2 (ADF2) of Zea mays (Maize).